Reading from the N-terminus, the 173-residue chain is Lipoprotein signal peptidase (173 aa).

Helical transmembrane passes span 12 to 32, 67 to 87, and 102 to 122; these read WLWL…WTIQ, WQRY…VYLL, and ALIL…GYVI. Catalysis depends on residues Asp123 and Asp141. Residues 137-157 traverse the membrane as a helical segment; that stretch reads FNIADSAIFTGAVIMIFESFF.

The protein belongs to the peptidase A8 family.

The protein resides in the cell inner membrane. The enzyme catalyses Release of signal peptides from bacterial membrane prolipoproteins. Hydrolyzes -Xaa-Yaa-Zaa-|-(S,diacylglyceryl)Cys-, in which Xaa is hydrophobic (preferably Leu), and Yaa (Ala or Ser) and Zaa (Gly or Ala) have small, neutral side chains.. The protein operates within protein modification; lipoprotein biosynthesis (signal peptide cleavage). In terms of biological role, this protein specifically catalyzes the removal of signal peptides from prolipoproteins. This chain is Lipoprotein signal peptidase, found in Psychromonas ingrahamii (strain DSM 17664 / CCUG 51855 / 37).